Consider the following 91-residue polypeptide: Lipolysis-activating peptide 1-alpha chain (91 aa).

An N-terminal signal peptide occupies residues 1–21; sequence MNIKLFCFLSILISLTGLSLS. Residues 23–87 form the LCN-type CS-alpha/beta domain; the sequence is DDGNYPIDAN…FFDAYKTYCK (65 aa). Intrachain disulfides connect C38–C61, C47–C66, and C51–C68.

It belongs to the long (3 C-C) scorpion toxin superfamily. As to quaternary structure, heterodimer of this alpha chain and a beta chain (AC D9U2A2). In terms of tissue distribution, expressed by the venom gland.

The protein resides in the secreted. The heterodimer LVP1 induces lipolysis in rat adipocytes. Induction of lipolysis by LVP1 appears to be mediated through the beta-2 adrenergic receptor pathway (ADRB2). This is Lipolysis-activating peptide 1-alpha chain from Lychas mucronatus (Chinese swimming scorpion).